A 317-amino-acid polypeptide reads, in one-letter code: tRNA(Ile)-lysidine synthase (317 aa).

30 to 35 (SGGSDS) is a binding site for ATP.

Belongs to the tRNA(Ile)-lysidine synthase family.

The protein localises to the cytoplasm. The catalysed reaction is cytidine(34) in tRNA(Ile2) + L-lysine + ATP = lysidine(34) in tRNA(Ile2) + AMP + diphosphate + H(+). Its function is as follows. Ligates lysine onto the cytidine present at position 34 of the AUA codon-specific tRNA(Ile) that contains the anticodon CAU, in an ATP-dependent manner. Cytidine is converted to lysidine, thus changing the amino acid specificity of the tRNA from methionine to isoleucine. The polypeptide is tRNA(Ile)-lysidine synthase (Chlamydia felis (strain Fe/C-56) (Chlamydophila felis)).